The primary structure comprises 603 residues: UvrABC system protein C (603 aa).

Residues aspartate 15 to isoleucine 92 form the GIY-YIG domain. One can recognise a UVR domain in the interval lysine 197–threonine 232.

This sequence belongs to the UvrC family. As to quaternary structure, interacts with UvrB in an incision complex.

It localises to the cytoplasm. In terms of biological role, the UvrABC repair system catalyzes the recognition and processing of DNA lesions. UvrC both incises the 5' and 3' sides of the lesion. The N-terminal half is responsible for the 3' incision and the C-terminal half is responsible for the 5' incision. This Listeria welshimeri serovar 6b (strain ATCC 35897 / DSM 20650 / CCUG 15529 / CIP 8149 / NCTC 11857 / SLCC 5334 / V8) protein is UvrABC system protein C.